Consider the following 353-residue polypeptide: Photosystem II protein D1 (353 aa).

Thr-2 is subject to N-acetylthreonine. Phosphothreonine is present on Thr-2. The next 3 membrane-spanning stretches (helical) occupy residues Tyr-29 to Ser-46, His-118 to Leu-133, and Trp-142 to Ala-156. His-118 provides a ligand contact to chlorophyll a. Tyr-126 lines the pheophytin a pocket. Residues Asp-170 and Glu-189 each contribute to the [CaMn4O5] cluster site. Residues Phe-197–Leu-218 form a helical membrane-spanning segment. Residue His-198 coordinates chlorophyll a. A quinone contacts are provided by residues His-215 and Ser-264–Phe-265. A Fe cation-binding site is contributed by His-215. Position 272 (His-272) interacts with Fe cation. Residues Phe-274–Leu-288 form a helical membrane-spanning segment. [CaMn4O5] cluster is bound by residues His-332, Glu-333, Asp-342, and Ala-344. The propeptide occupies Val-345–Gly-353.

It belongs to the reaction center PufL/M/PsbA/D family. PSII is composed of 1 copy each of membrane proteins PsbA, PsbB, PsbC, PsbD, PsbE, PsbF, PsbH, PsbI, PsbJ, PsbK, PsbL, PsbM, PsbT, PsbX, PsbY, PsbZ, Psb30/Ycf12, at least 3 peripheral proteins of the oxygen-evolving complex and a large number of cofactors. It forms dimeric complexes. The D1/D2 heterodimer binds P680, chlorophylls that are the primary electron donor of PSII, and subsequent electron acceptors. It shares a non-heme iron and each subunit binds pheophytin, quinone, additional chlorophylls, carotenoids and lipids. D1 provides most of the ligands for the Mn4-Ca-O5 cluster of the oxygen-evolving complex (OEC). There is also a Cl(-1) ion associated with D1 and D2, which is required for oxygen evolution. The PSII complex binds additional chlorophylls, carotenoids and specific lipids. is required as a cofactor. Tyr-161 forms a radical intermediate that is referred to as redox-active TyrZ, YZ or Y-Z. In terms of processing, C-terminally processed by CTPA; processing is essential to allow assembly of the oxygen-evolving complex and thus photosynthetic growth.

It is found in the plastid. It localises to the chloroplast thylakoid membrane. The catalysed reaction is 2 a plastoquinone + 4 hnu + 2 H2O = 2 a plastoquinol + O2. Its function is as follows. Photosystem II (PSII) is a light-driven water:plastoquinone oxidoreductase that uses light energy to abstract electrons from H(2)O, generating O(2) and a proton gradient subsequently used for ATP formation. It consists of a core antenna complex that captures photons, and an electron transfer chain that converts photonic excitation into a charge separation. The D1/D2 (PsbA/PsbD) reaction center heterodimer binds P680, the primary electron donor of PSII as well as several subsequent electron acceptors. The polypeptide is Photosystem II protein D1 (Chlorella vulgaris (Green alga)).